We begin with the raw amino-acid sequence, 133 residues long: Ribonuclease P protein component (133 aa).

Belongs to the RnpA family. Consists of a catalytic RNA component (M1 or rnpB) and a protein subunit.

It catalyses the reaction Endonucleolytic cleavage of RNA, removing 5'-extranucleotides from tRNA precursor.. Functionally, RNaseP catalyzes the removal of the 5'-leader sequence from pre-tRNA to produce the mature 5'-terminus. It can also cleave other RNA substrates such as 4.5S RNA. The protein component plays an auxiliary but essential role in vivo by binding to the 5'-leader sequence and broadening the substrate specificity of the ribozyme. This Pseudomonas savastanoi pv. phaseolicola (strain 1448A / Race 6) (Pseudomonas syringae pv. phaseolicola (strain 1448A / Race 6)) protein is Ribonuclease P protein component.